Reading from the N-terminus, the 1242-residue chain is ATP-dependent RNA helicase DHX8 (1242 aa).

2 disordered regions span residues 75 to 283 (RPSR…DDPE) and 354 to 449 (SMKE…GLLP). Composition is skewed to basic and acidic residues over residues 87–97 (TVGDKKEDKKS), 113–141 (YSKKEESDDDEKVKAKPEKHSETHKKTDM), and 180–196 (RDRDTKRRSRSREDRHS). Composition is skewed to basic residues over residues 197–222 (DRRRSRSRDKERRRRSRSRDNRRRSR) and 232–252 (DRRHKSSSSRDHHERRRRSRS). Basic and acidic residues predominate over residues 253–269 (RSTERRDRRDRSRDCSE). Positions 285–356 (GKIYSGKIAN…TGQKVSLSMK (72 aa)) constitute an S1 motif domain. Polar residues predominate over residues 388 to 399 (FSSSTSMLNLQG). Residues 439–449 (PDFDEETGLLP) show a composition bias toward acidic residues. Positions 596 to 759 (IKAVTDNQIL…FFKAPIFTIP (164 aa)) constitute a Helicase ATP-binding domain. 609-616 (GETGSGKT) is an ATP binding site. Residues 706-709 (DEAH) carry the DEAH box motif. The region spanning 777 to 957 (YLDASLITVM…TTVLQLKTMG (181 aa)) is the Helicase C-terminal domain.

Belongs to the DEAD box helicase family. DEAH subfamily. DDX8/PRP22 sub-subfamily. As to quaternary structure, identified in the spliceosome C complex.

It is found in the nucleus. It catalyses the reaction ATP + H2O = ADP + phosphate + H(+). In terms of biological role, involved in pre-mRNA splicing as component of the spliceosome. Facilitates nuclear export of spliced mRNA by releasing the RNA from the spliceosome. Before and after egg-chamber formation, required for nurse-cell chromatin dispersal (NCCD) probably by playing a role in spliceosome localization to chromatin/interchromatin spaces. The polypeptide is ATP-dependent RNA helicase DHX8 (Drosophila melanogaster (Fruit fly)).